Consider the following 572-residue polypeptide: Alpha-1D adrenergic receptor (572 aa).

The tract at residues 1-77 (MTFRDLLSVS…SAGEPGSAGA (77 aa)) is disordered. The Extracellular segment spans residues 1-95 (MTFRDLLSVS…AVGGLVVSAQ (95 aa)). 2 stretches are compositionally biased toward gly residues: residues 23 to 33 (SSAGGGGGSAG) and 42 to 61 (AVGGVPGGAGGGGGVVGAGS). N65 and N82 each carry an N-linked (GlcNAc...) asparagine glycan. Residues 96 to 121 (GVGVGVFLAAFILMAVAGNLLVILSV) traverse the membrane as a helical segment. The Cytoplasmic segment spans residues 122–133 (ACNRHLQTVTNY). The helical transmembrane segment at 134-159 (FIVNLAVADLLLSATVLPFSATMEVL) threads the bilayer. The Extracellular segment spans residues 160–169 (GFWAFGRAFC). A helical transmembrane segment spans residues 170-192 (DVWAAVDVLCCTASILSLCTISV). Topologically, residues 193 to 213 (DRYVGVRHSLKYPAIMTERKA) are cytoplasmic. Residues 214-238 (AAILALLWVVALVVSVGPLLGWKEP) form a helical membrane-spanning segment. The Extracellular portion of the chain corresponds to 239–251 (VPPDERFCGITEE). The chain crosses the membrane as a helical span at residues 252–275 (AGYAVFSSVCSFYLPMAVIVVMYC). Residues 276 to 348 (RVYVVARSTT…KFSREKKAAK (73 aa)) are Cytoplasmic-facing. The chain crosses the membrane as a helical span at residues 349 to 373 (TLAIVVGVFVLCWFPFFFVLPLGSL). Topologically, residues 374–380 (FPQLKPS) are extracellular. Residues 381–405 (EGVFKVIFWLGYFNSCVNPLIYPCS) traverse the membrane as a helical segment. The Cytoplasmic segment spans residues 406 to 572 (SREFKRAFLR…DYSNLRETDI (167 aa)). C419 carries S-palmitoyl cysteine lipidation. Positions 444 to 488 (GLRQDCAPSSGDAPPGAPLALTALPDPDPEPPGTPEMQAPVASRR) are disordered. Residues 450–468 (APSSGDAPPGAPLALTALP) show a composition bias toward low complexity.

It belongs to the G-protein coupled receptor 1 family. Adrenergic receptor subfamily. ADRA1D sub-subfamily. Interacts with FLNA (via filamin repeat 21); increases PKA-mediated phosphorylation of FLNA. Post-translationally, palmitoylated. Palmitoylation by ZDHHC21 may increase the expression of the receptor and regulate downstream signaling.

The protein localises to the cell membrane. Functionally, this alpha-adrenergic receptor mediates its effect through the influx of extracellular calcium. The chain is Alpha-1D adrenergic receptor (ADRA1D) from Homo sapiens (Human).